The primary structure comprises 1213 residues: DNA-directed RNA polymerase subunit beta' (1213 aa).

Positions 60, 62, 75, and 78 each coordinate Zn(2+). 3 residues coordinate Mg(2+): Asp450, Asp452, and Asp454. Zn(2+) contacts are provided by Cys819, Cys893, Cys900, and Cys903.

Belongs to the RNA polymerase beta' chain family. The RNAP catalytic core consists of 2 alpha, 1 beta, 1 beta' and 1 omega subunit. When a sigma factor is associated with the core the holoenzyme is formed, which can initiate transcription. The cofactor is Mg(2+). Requires Zn(2+) as cofactor.

It carries out the reaction RNA(n) + a ribonucleoside 5'-triphosphate = RNA(n+1) + diphosphate. Its function is as follows. DNA-dependent RNA polymerase catalyzes the transcription of DNA into RNA using the four ribonucleoside triphosphates as substrates. The chain is DNA-directed RNA polymerase subunit beta' from Streptococcus pyogenes serotype M28 (strain MGAS6180).